The chain runs to 33 residues: MSPPSSMCSPVPLLAAASGQNRMTQGQHFLQKV.

As to expression, expressed in testis and melanoma cell lines.

This Homo sapiens (Human) protein is Putative tumor antigen NA88-A (VENTXP1).